A 158-amino-acid chain; its full sequence is MAFDETYNEPESTEVLVKSLDPEHPAQLHYAHAGDAGADLITTVDVTLKPFERALVPTGVAIALPAGYVALVHPRSGLAAKQGVTVLNAPGTVDAGYRGEIKVPLINLDPKHTAVFHPGDRIAQLVIQRYVEARFIPAETLPGSDRAERGFGSTGVAS.

Substrate-binding positions include 75-77, Asn-88, 92-94, and Lys-102; these read RSG and TVD.

The protein belongs to the dUTPase family. Mg(2+) serves as cofactor.

It catalyses the reaction dUTP + H2O = dUMP + diphosphate + H(+). The protein operates within pyrimidine metabolism; dUMP biosynthesis; dUMP from dCTP (dUTP route): step 2/2. This enzyme is involved in nucleotide metabolism: it produces dUMP, the immediate precursor of thymidine nucleotides and it decreases the intracellular concentration of dUTP so that uracil cannot be incorporated into DNA. The protein is Deoxyuridine 5'-triphosphate nucleotidohydrolase of Bifidobacterium longum (strain DJO10A).